The sequence spans 187 residues: Putative protein 2 (187 aa).

2 helical membrane-spanning segments follow: residues methionine 10–valine 27 and valine 99–valine 121.

The protein belongs to the TMEM9 family.

It is found in the membrane. The protein is Putative protein 2 of Takifugu rubripes (Japanese pufferfish).